A 147-amino-acid chain; its full sequence is Flagellar assembly factor FliW (147 aa).

It belongs to the FliW family. Interacts with translational regulator CsrA and flagellin(s).

The protein localises to the cytoplasm. Acts as an anti-CsrA protein, binds CsrA and prevents it from repressing translation of its target genes, one of which is flagellin. Binds to flagellin and participates in the assembly of the flagellum. This is Flagellar assembly factor FliW from Oceanobacillus iheyensis (strain DSM 14371 / CIP 107618 / JCM 11309 / KCTC 3954 / HTE831).